We begin with the raw amino-acid sequence, 223 residues long: DNA mismatch repair protein MutH (223 aa).

This sequence belongs to the MutH family.

It is found in the cytoplasm. Functionally, sequence-specific endonuclease that cleaves unmethylated GATC sequences. It is involved in DNA mismatch repair. The sequence is that of DNA mismatch repair protein MutH from Shewanella sp. (strain ANA-3).